The primary structure comprises 343 residues: Transcription factor MYB83 (343 aa).

Basic and acidic residues predominate over residues Met-1–Lys-16. A disordered region spans residues Met-1–Gly-33. HTH myb-type domains follow at residues Lys-27–Leu-79 and Arg-80–Leu-134. DNA-binding regions (H-T-H motif) lie at residues Trp-55–Leu-79 and Trp-107–Leu-130. The tract at residues Leu-134–Leu-172 is disordered. Positions Asn-136 to Ser-155 are enriched in low complexity.

As to expression, expressed specifically in fiber and vessel cells that are undergoing secondary wall thickening in floral stems. Expressed in vessels but not in xylary fibers in the developing secondary xylem of roots.

Its subcellular location is the nucleus. In terms of biological role, transcription factor that acts as a molecular switch in the NAC012/SND1-mediated transcriptional network regulating secondary wall biosynthesis. Is directly activated by NAC012/SND1 and its close homologs, including NAC043/NST1, NAC066/NST2, NAC101/VND6 and NAC030/VND7. Is required for functional expression of a number of secondary wall-associated transcription factors and secondary wall biosynthetic genes involved in cellulose, xylan and lignin synthesis. Functions redundantly with MYB46 in the transcriptional regulatory cascade leading to secondary wall formation in fibers and vessels. Transcription activator that binds to the DNA consensus sequence 5'-ACC[AT]A[AC][TC]-3', designated as the secondary wall MYB-responsive element (SMRE). Regulates directly numerous transcription factors and a number of genes involved in secondary wall biosynthesis that contain SMRE elements in their promoters. The sequence is that of Transcription factor MYB83 from Arabidopsis thaliana (Mouse-ear cress).